The sequence spans 310 residues: p-hydroxybenzoic acid efflux pump subunit AaeA (310 aa).

The helical transmembrane segment at 12-32 (AITVVLVILAFIAIFNAWVYY) threads the bilayer.

Belongs to the membrane fusion protein (MFP) (TC 8.A.1) family.

It localises to the cell inner membrane. In terms of biological role, forms an efflux pump with AaeB. This is p-hydroxybenzoic acid efflux pump subunit AaeA from Shigella sonnei (strain Ss046).